A 393-amino-acid polypeptide reads, in one-letter code: Branched-chain-amino-acid aminotransferase, mitochondrial (393 aa).

The transit peptide at 1–27 (MSAAILGQVWTRKLLPIPWRLCVPGRC) directs the protein to the mitochondrion. Y169 contacts substrate. K230 is subject to N6-(pyridoxal phosphate)lysine. Position 322 is an N6-acetyllysine (K322).

The protein belongs to the class-IV pyridoxal-phosphate-dependent aminotransferase family. In terms of assembly, homodimer. The cofactor is pyridoxal 5'-phosphate. As to expression, expressed in all tissues.

The protein resides in the mitochondrion. The catalysed reaction is L-leucine + 2-oxoglutarate = 4-methyl-2-oxopentanoate + L-glutamate. The enzyme catalyses L-isoleucine + 2-oxoglutarate = (S)-3-methyl-2-oxopentanoate + L-glutamate. It catalyses the reaction L-valine + 2-oxoglutarate = 3-methyl-2-oxobutanoate + L-glutamate. Catalyzes the first reaction in the catabolism of the essential branched chain amino acids leucine, isoleucine, and valine. May also function as a transporter of branched chain alpha-keto acids. This Rattus norvegicus (Rat) protein is Branched-chain-amino-acid aminotransferase, mitochondrial (Bcat2).